The sequence spans 148 residues: Single-stranded DNA-binding protein 1-B, mitochondrial (148 aa).

Residues 1–17 (MFHRPVLQVFRQFARCQ) constitute a mitochondrion transit peptide. The region spanning 30-142 (MNKVQLLGRV…IIADNIIFLT (113 aa)) is the SSB domain.

As to quaternary structure, homotetramer.

It is found in the mitochondrion. It localises to the mitochondrion matrix. Its subcellular location is the mitochondrion nucleoid. In terms of biological role, binds preferentially and cooperatively to pyrimidine rich single-stranded DNA (ss-DNA). Required to maintain the copy number of mitochondrial DNA (mtDNA) and plays crucial roles during mtDNA replication that stimulate activity of the DNA polymerase at the replication fork. May also function in mtDNA repair. This is Single-stranded DNA-binding protein 1-B, mitochondrial (ssbp1-b) from Xenopus laevis (African clawed frog).